The sequence spans 59 residues: Small, acid-soluble spore protein H (59 aa).

The protein belongs to the SspH family.

It localises to the spore core. The polypeptide is Small, acid-soluble spore protein H (Alkaliphilus metalliredigens (strain QYMF)).